A 523-amino-acid polypeptide reads, in one-letter code: Protein tweety homolog 3 (523 aa).

At 1–42 the chain is on the extracellular side; it reads MAGVSYAAPWWVSLLHRLPHFDLSWEATSSQFRPEDTDYQQA. The chain crosses the membrane as a helical span at residues 43–63; it reads LLLLGAAALACLALDLLFLLF. At 64 to 86 the chain is on the cytoplasmic side; the sequence is YSFWLCCRRRKSEEHLDADCCCT. A helical transmembrane segment spans residues 87-107; it reads AWCVIIATLVCSAGIAVGFYG. Topologically, residues 108-211 are extracellular; sequence NGETSDGIHR…VDLYDWYRWL (104 aa). The Ca(2+) site is built by E110 and D113. Residues N126 and N144 are each glycosylated (N-linked (GlcNAc...) asparagine). A helical membrane pass occupies residues 212 to 232; the sequence is GYLGLLLLDVIICLLVLVGLI. Residues 233-236 lie on the Cytoplasmic side of the membrane; it reads RSSK. The helical transmembrane segment at 237 to 257 threads the bilayer; that stretch reads GILVGVCLLGVLALVISWGAL. The Extracellular segment spans residues 258–386; sequence GLELAVSVGS…LTGFCYDGVE (129 aa). 2 cysteine pairs are disulfide-bonded: C271-C381 and C299-C366. Residue N351 is glycosylated (N-linked (GlcNAc...) asparagine). The chain crosses the membrane as a helical span at residues 387–407; the sequence is GLIYLALFSFVTALMFSSIVC. Residues 408–523 lie on the Cytoplasmic side of the membrane; that stretch reads SVPHTWQQKR…QPRPDSSGSH (116 aa). Disordered stretches follow at residues 413 to 435 and 482 to 523; these read WQQK…RQAH and QNPR…SGSH. S496 is subject to Phosphoserine. Residues 498 to 501 carry the PY-motif; mediates interaction with NEDD4L motif; the sequence is PPSY. Residues 501–523 are compositionally biased toward polar residues; the sequence is YTSSMRAKYLATSQPRPDSSGSH. S504 and S522 each carry phosphoserine.

It belongs to the tweety family. In terms of assembly, homotetramer; disulfide-linked. Homodimer. Interacts with NEDD4L. Post-translationally, ubiquitinated by NEDD4L. N-Glycosylated. Contains high-mannose, hybrid and complex oligosaccharides. As to expression, expressed in excitable tissues. Expressed in the brain, heart, skeletal muscle, colon, spleen, kidney and peripheral blood leukocytes.

Its subcellular location is the cell membrane. The enzyme catalyses chloride(in) = chloride(out). The catalysed reaction is L-glutamate(out) = L-glutamate(in). In terms of biological role, calcium-independent, swelling-dependent volume-regulated anion channel (VRAC-swell) which plays a pivotal role in the process of regulatory volume decrease (RVD) in the brain through the efflux of anions like chloride and organic osmolytes like glutamate. Probable large-conductance Ca(2+)-activated chloride channel. In Homo sapiens (Human), this protein is Protein tweety homolog 3 (TTYH3).